We begin with the raw amino-acid sequence, 782 residues long: E3 ubiquitin-protein ligase SopA (782 aa).

The disordered stretch occupies residues 137–171 (VSVSANNRPTVSEGRTPPVSPSLSLQATSSPSSPA). Over residues 157-171 (PSLSLQATSSPSSPA) the composition is skewed to low complexity. The active-site Glycyl thioester intermediate is Cys753.

This sequence belongs to the SopA E3 ligase family. Ubiquitinated in the presence of host E1 ubiquitin-activating enzyme, E2 ubiquitin-conjugating enzyme and ubiquitin.

Its subcellular location is the secreted. The protein resides in the host cell. The catalysed reaction is S-ubiquitinyl-[E2 ubiquitin-conjugating enzyme]-L-cysteine + [acceptor protein]-L-lysine = [E2 ubiquitin-conjugating enzyme]-L-cysteine + N(6)-ubiquitinyl-[acceptor protein]-L-lysine.. In terms of biological role, effector proteins function to alter host cell physiology and promote bacterial survival in host tissues. This protein is an E3 ubiquitin ligase that interferes with host's ubiquitination pathway. This is E3 ubiquitin-protein ligase SopA (sopA) from Salmonella enteritidis PT4 (strain P125109).